The chain runs to 154 residues: SsrA-binding protein (154 aa).

The tract at residues 134–154 is disordered; it reads ETLRRRDAKREVERALKEKNR.

Belongs to the SmpB family.

Its subcellular location is the cytoplasm. Functionally, required for rescue of stalled ribosomes mediated by trans-translation. Binds to transfer-messenger RNA (tmRNA), required for stable association of tmRNA with ribosomes. tmRNA and SmpB together mimic tRNA shape, replacing the anticodon stem-loop with SmpB. tmRNA is encoded by the ssrA gene; the 2 termini fold to resemble tRNA(Ala) and it encodes a 'tag peptide', a short internal open reading frame. During trans-translation Ala-aminoacylated tmRNA acts like a tRNA, entering the A-site of stalled ribosomes, displacing the stalled mRNA. The ribosome then switches to translate the ORF on the tmRNA; the nascent peptide is terminated with the 'tag peptide' encoded by the tmRNA and targeted for degradation. The ribosome is freed to recommence translation, which seems to be the essential function of trans-translation. This is SsrA-binding protein from Halalkalibacterium halodurans (strain ATCC BAA-125 / DSM 18197 / FERM 7344 / JCM 9153 / C-125) (Bacillus halodurans).